Reading from the N-terminus, the 309-residue chain is Probable lipid kinase YegS-like (309 aa).

Positions 1–134 (MAPSHWRVIL…VDLLRIDADH (134 aa)) constitute a DAGKc domain. ATP contacts are provided by residues threonine 39, 65 to 71 (GDGTLSE), and threonine 96. Residues leucine 219, aspartate 222, and leucine 224 each coordinate Mg(2+). The active-site Proton acceptor is glutamate 280.

It belongs to the diacylglycerol/lipid kinase family. YegS lipid kinase subfamily. It depends on Mg(2+) as a cofactor. Requires Ca(2+) as cofactor.

The protein resides in the cytoplasm. Probably phosphorylates lipids; the in vivo substrate is unknown. The protein is Probable lipid kinase YegS-like of Xanthomonas euvesicatoria pv. vesicatoria (strain 85-10) (Xanthomonas campestris pv. vesicatoria).